A 543-amino-acid chain; its full sequence is Glucose-6-phosphate isomerase (543 aa).

E353 functions as the Proton donor in the catalytic mechanism. Active-site residues include H384 and K504.

It belongs to the GPI family.

It localises to the cytoplasm. It carries out the reaction alpha-D-glucose 6-phosphate = beta-D-fructose 6-phosphate. It functions in the pathway carbohydrate biosynthesis; gluconeogenesis. Its pathway is carbohydrate degradation; glycolysis; D-glyceraldehyde 3-phosphate and glycerone phosphate from D-glucose: step 2/4. Its function is as follows. Catalyzes the reversible isomerization of glucose-6-phosphate to fructose-6-phosphate. The chain is Glucose-6-phosphate isomerase from Roseiflexus castenholzii (strain DSM 13941 / HLO8).